The primary structure comprises 1481 residues: Cystic fibrosis transmembrane conductance regulator (1481 aa).

The Cytoplasmic portion of the chain corresponds to 1–77 (MQRSPLEKAS…KLINALRRCF (77 aa)). Residues 78–98 (FWRFTFYGILLYLGEVTKAVQ) traverse the membrane as a helical segment. The region spanning 81-365 (FTFYGILLYL…WAVQTWYDSL (285 aa)) is the ABC transmembrane type-1 1 domain. Topologically, residues 99-122 (PLLLGRIIASYDPDNKTERSIAIY) are extracellular. The helical transmembrane segment at 123 to 146 (LGIGLCLLFIVRTLLLHPAIFGLH) threads the bilayer. At 147-195 (HIGMQMRIAMFSLIYKKTLKLSSRVLDKISIGQLVSLLSNNLNKFDEGL) the chain is on the cytoplasmic side. The chain crosses the membrane as a helical span at residues 196–216 (ALAHFVWIAPLQVALLMGLIW). Topologically, residues 217-222 (ELLQAS) are extracellular. A helical membrane pass occupies residues 223 to 243 (AFCGLGFLIVLALFQAGLGRM). Topologically, residues 244–298 (MMKYRDQRAGKINERLVITSEMIENIQSVKAYCWEEAMEKMIENLRQTELKLTRK) are cytoplasmic. A helical membrane pass occupies residues 299–319 (AAYVRYFNSSAFFFSGFFVVF). The Extracellular portion of the chain corresponds to 320-339 (LSVLPYALIKGIILRKIFTT). A helical transmembrane segment spans residues 340-358 (ISFCIVLRMAVTRQFPWAV). At 359–858 (QTWYDSLGAI…YLRYITLHKS (500 aa)) the chain is on the cytoplasmic side. Residues tryptophan 401, serine 434, 458–465 (GSTGAGKT), and glutamine 493 each bind ATP. The ABC transporter 1 domain occupies 423–646 (NDDNNLFFSN…RPDFSSKLMG (224 aa)). Cysteine 524 carries S-palmitoyl cysteine lipidation. 2 positions are modified to phosphoserine: serine 549 and serine 660. The disordered R region stretch occupies residues 654–831 (SSERRNSILT…EEINEEDLKE (178 aa)). Phosphoserine; by PKA is present on serine 670. Serine 686 bears the Phosphoserine mark. Lysine 688 participates in a covalent cross-link: Glycyl lysine isopeptide (Lys-Gly) (interchain with G-Cter in ubiquitin). A phosphoserine mark is found at serine 700 and serine 712. Threonine 717 is subject to Phosphothreonine. Phosphoserine occurs at positions 737, 753, 768, 790, 795, and 813. Residues 859–879 (LIFVLIWCLVIFLAEVAASLV) form a helical membrane-spanning segment. The ABC transmembrane type-1 2 domain occupies 859–1155 (LIFVLIWCLV…AVNSSIDVDS (297 aa)). Topologically, residues 880–918 (VLWLLRNTPFQDKGNSTYSRNNSYAVIITNTSSYYVFYI) are extracellular. Asparagine 894, asparagine 900, and asparagine 909 each carry an N-linked (GlcNAc...) asparagine glycan. A discontinuously helical membrane pass occupies residues 919 to 939 (YVGVADTLLALGFFRGLPLVH). Over 940–990 (TLITVSKILHHKMLHSVLQAPMSTLNTLKAGGILNRFSKDIAILDDLLPLT) the chain is Cytoplasmic. The helical transmembrane segment at 991 to 1011 (IFDFIQLLLIVIGAIAVVSVL) threads the bilayer. The Extracellular segment spans residues 1012 to 1013 (QP). A helical membrane pass occupies residues 1014–1034 (YIFLATVPVIAAFVLLRAYFL). Residues 1035–1095 (QTSQQLKQLE…TANWFLYLST (61 aa)) are Cytoplasmic-facing. A helical membrane pass occupies residues 1096-1116 (LRWFQMRIEMIFVIFFIAVTF). Over 1117 to 1130 (ISILTTGEGEGTVG) the chain is Extracellular. Residues 1131 to 1151 (IILTLAMNIMSTLQWAVNSSI) traverse the membrane as a helical segment. The Cytoplasmic segment spans residues 1152-1481 (DVDSLMRSVS…TEEEVQETRL (330 aa)). One can recognise an ABC transporter 2 domain in the interval 1211–1444 (MTIKDLTAKY…KSLFRQAISH (234 aa)). ATP is bound by residues tyrosine 1220 and 1245–1252 (GRTGSGKS). Residues 1387–1481 (RALKQAFADC…TEEEVQETRL (95 aa)) form an interaction with GORASP2 region. Cysteine 1396 carries the S-palmitoyl cysteine lipid modification. Phosphoserine is present on residues serine 1445 and serine 1457. Positions 1453 to 1481 (HRNSSKYKSRPQIASLKEETEEEVQETRL) are disordered. Over residues 1471 to 1481 (ETEEEVQETRL) the composition is skewed to acidic residues. The short motif at 1479–1481 (TRL) is the PDZ-binding element.

It belongs to the ABC transporter superfamily. ABCC family. CFTR transporter (TC 3.A.1.202) subfamily. Monomer; does not require oligomerization for channel activity. May form oligomers in the membrane. Interacts with SLC26A3, SLC26A6 and NHERF1. Interacts with SHANK2. Interacts with MYO6. Interacts (via C-terminus) with GOPC (via PDZ domain); this promotes CFTR internalization and thereby decreases channel activity. Interacts with SLC4A7 through NHERF1. Found in a complex with MYO5B and RAB11A. Interacts with ANO1. Interacts with SLC26A8. Interacts with AHCYL1; the interaction increases CFTR activity. Interacts with CSE1L. The core-glycosylated form interacts with GORASP2 (via PDZ GRASP-type 1 domain) in respone to ER stress. Interacts with MARCHF2; the interaction leads to CFTR ubiqtuitination and degradation. Interacts with ADGRG2. Post-translationally, N-glycosylated. Phosphorylated; cAMP treatment promotes phosphorylation and activates the channel. Dephosphorylation decreases the ATPase activity (in vitro). Phosphorylation at PKA sites activates the channel. Phosphorylation at PKC sites enhances the response to phosphorylation by PKA. Phosphorylated by AMPK; this inhibits channel activity. In terms of processing, ubiquitinated, leading to its degradation in the lysosome. Deubiquitination by USP10 in early endosomes enhances its endocytic recycling to the cell membrane. Ubiquitinated by RNF185 during ER stress. Ubiquitinated by MARCHF2.

Its subcellular location is the apical cell membrane. It localises to the early endosome membrane. It is found in the cell membrane. The protein resides in the recycling endosome membrane. The protein localises to the endoplasmic reticulum membrane. Its subcellular location is the nucleus. It catalyses the reaction ATP + H2O + closed Cl(-) channel = ADP + phosphate + open Cl(-) channel.. The catalysed reaction is chloride(in) = chloride(out). It carries out the reaction hydrogencarbonate(in) = hydrogencarbonate(out). The enzyme catalyses ATP + H2O = ADP + phosphate + H(+). In terms of biological role, epithelial ion channel that plays an important role in the regulation of epithelial ion and water transport and fluid homeostasis. Mediates the transport of chloride ions across the cell membrane. Possesses an intrinsic ATPase activity and utilizes ATP to gate its channel; the passive flow of anions through the channel is gated by cycles of ATP binding and hydrolysis by the ATP-binding domains. The ion channel is also permeable to HCO(3)(-); selectivity depends on the extracellular chloride concentration. Exerts its function also by modulating the activity of other ion channels and transporters. Contributes to the regulation of the pH and the ion content of the epithelial fluid layer. Modulates the activity of the epithelial sodium channel (ENaC) complex, in part by regulating the cell surface expression of the ENaC complex. May regulate bicarbonate secretion and salvage in epithelial cells by regulating the transporter SLC4A7. Can inhibit the chloride channel activity of ANO1. Plays a role in the chloride and bicarbonate homeostasis during sperm epididymal maturation and capacitation. The protein is Cystic fibrosis transmembrane conductance regulator of Callithrix jacchus (White-tufted-ear marmoset).